Here is a 464-residue protein sequence, read N- to C-terminus: ATP synthase subunit beta (464 aa).

Residue glycine 153–threonine 160 coordinates ATP.

The protein belongs to the ATPase alpha/beta chains family. As to quaternary structure, F-type ATPases have 2 components, CF(1) - the catalytic core - and CF(0) - the membrane proton channel. CF(1) has five subunits: alpha(3), beta(3), gamma(1), delta(1), epsilon(1). CF(0) has three main subunits: a(1), b(2) and c(9-12). The alpha and beta chains form an alternating ring which encloses part of the gamma chain. CF(1) is attached to CF(0) by a central stalk formed by the gamma and epsilon chains, while a peripheral stalk is formed by the delta and b chains.

The protein localises to the cell membrane. The catalysed reaction is ATP + H2O + 4 H(+)(in) = ADP + phosphate + 5 H(+)(out). Produces ATP from ADP in the presence of a proton gradient across the membrane. The catalytic sites are hosted primarily by the beta subunits. The polypeptide is ATP synthase subunit beta (Alkaliphilus metalliredigens (strain QYMF)).